The following is a 649-amino-acid chain: MADDSGTENEGSGCTGWFMVEAIVEHTTGTQISEDEEEEVEDSGYDMVDFIDDRHITQNSVEAQALFNRQEADAHYATVQDLKRKYLGSPYVSPISNVANAVESEISPRLDAIKLTTQPKKVKRRLFETRELTDSGYGYSEVEAATQVEKHGDPENGGDGQERDTGRDIEGEGVEHREAEAVDDSTREHADTSGILELLKCKDIRSTLHGKFKDCFGLSFVDLIRPFKSDRTTCADWVVAGFGIHHSIADAFQKLIEPLSLYAHIQWLTNAWGMVLLVLIRFKVNKSRCTVARTLGTLLNIPENHMLIEPPKIQSGVRALYWFRTGISNASTVIGEAPEWITRQTVIEHSLADSQFKLTEMVQWAYDNDICEESEIAFEYAQRGDFDSNARAFLNSNMQAKYVKDCAIMCRHYKHAEMKKMSIKQWIKYRGTKVDSVGNWKPIVQFLRHQNIEFIPFLSKLKLWLHGTPKKNCIAIVGPPDTGKSCFCMSLIKFLGGTVISYVNSCSHFWLQPLTDAKVALLDDATQPCWTYMDTYMRNLLDGNPMSIDRKHRALTLIKCPPLLVTSNIDISKEEKYKYLHSRVTTFTFPNPFPFDRNGNAVYELSDANWKCFFERLSSSLDIEDSEDEEDGSNSQAFRCVPGSVVRTL.

The Nuclear localization signal signature appears at 83–85; it reads KRK. 3 positions are modified to phosphoserine; by host: Ser-89, Ser-93, and Ser-107. Residues 106 to 115 carry the Nuclear export signal motif; that stretch reads ISPRLDAIKL. Residues 146–188 are disordered; sequence TQVEKHGDPENGGDGQERDTGRDIEGEGVEHREAEAVDDSTRE. Positions 148–188 are enriched in basic and acidic residues; that stretch reads VEKHGDPENGGDGQERDTGRDIEGEGVEHREAEAVDDSTRE. Residues 187–353 are DNA-binding region; it reads REHADTSGIL…QTVIEHSLAD (167 aa). An SF3 helicase domain is found at 452-602; that stretch reads IEFIPFLSKL…FPFDRNGNAV (151 aa). Position 478–485 (478–485) interacts with ATP; that stretch reads GPPDTGKS. Residue Lys-559 forms a Glycyl lysine isopeptide (Lys-Gly) (interchain with G-Cter in SUMO) linkage.

This sequence belongs to the papillomaviridae E1 protein family. In terms of assembly, can form hexamers. Interacts with E2 protein; this interaction increases E1 DNA binding specificity. Interacts with host DNA polymerase subunit POLA2. Interacts with host single stranded DNA-binding protein RPA1. Interacts with host TOP1; this interaction stimulates the enzymatic activity of TOP1. Post-translationally, phosphorylated. In terms of processing, sumoylated.

It is found in the host nucleus. It carries out the reaction Couples ATP hydrolysis with the unwinding of duplex DNA by translocating in the 3'-5' direction.. The catalysed reaction is ATP + H2O = ADP + phosphate + H(+). Functionally, ATP-dependent DNA 3'-5' helicase required for initiation of viral DNA replication. It forms a complex with the viral E2 protein. The E1-E2 complex binds to the replication origin which contains binding sites for both proteins. During the initial step, a dimer of E1 interacts with a dimer of protein E2 leading to a complex that binds the viral origin of replication with high specificity. Then, a second dimer of E1 displaces the E2 dimer in an ATP-dependent manner to form the E1 tetramer. Following this, two E1 monomers are added to each half of the site, which results in the formation of two E1 trimers on the viral ori. Subsequently, two hexamers will be created. The double hexamer acts as a bi-directional helicase machinery and unwinds the viral DNA and then recruits the host DNA polymerase to start replication. In Human papillomavirus 11, this protein is Replication protein E1.